The following is a 365-amino-acid chain: Chorismate synthase (365 aa).

Arg-48 is a binding site for NADP(+). FMN contacts are provided by residues 125–127 (RSS), 238–239 (NA), Gly-278, 293–297 (KPTSS), and Arg-319.

Belongs to the chorismate synthase family. As to quaternary structure, homotetramer. FMNH2 serves as cofactor.

It catalyses the reaction 5-O-(1-carboxyvinyl)-3-phosphoshikimate = chorismate + phosphate. Its pathway is metabolic intermediate biosynthesis; chorismate biosynthesis; chorismate from D-erythrose 4-phosphate and phosphoenolpyruvate: step 7/7. Catalyzes the anti-1,4-elimination of the C-3 phosphate and the C-6 proR hydrogen from 5-enolpyruvylshikimate-3-phosphate (EPSP) to yield chorismate, which is the branch point compound that serves as the starting substrate for the three terminal pathways of aromatic amino acid biosynthesis. This reaction introduces a second double bond into the aromatic ring system. The sequence is that of Chorismate synthase from Ruthia magnifica subsp. Calyptogena magnifica.